We begin with the raw amino-acid sequence, 535 residues long: MRRENARVVALPLFRTSWMVIALALVAYGAILAGSIIPTMTGAAVSSIATAVLGGALAMYTGMRTRAAPVRLGGRATAARRSYLTLAFAAVGMLYLAVVAGALNTSAGTLWTCQTWPGCEASGSGDWPALAHRGLAGVATILIAALAMQTWRIRHERALRVAVACALGLMLVQNIVGLVQVLLAQAGESLPLAVARLTHLGLSATAWGALVVLVTLALRRPFPSVVAAPSPATVARPGLTDTTLLEGKPSLLKDYVSLTKPGVISLLILTTITSMYITPAGIPEWSLVLWTTIGGWLMASGSHSINCYLDKDIDINMGRTSRRPIPSGRIPAWHALALGVVLGMIAFAILAIFVNMLTALLALAGFFYYVVIYTIWLKRTSKHNIVIGGGAGAFPPLVGWAAVTGSLAPEALLLWLIVFFWTPPHFWALALIREKDYARAGVPMLPVVAGDVETRRQIVLYTLSMLALTALPPLLGMLGWSYLLMASIFGGLFLYYALKLRRDGTTATAWALYKYSLLYLALLFVAMVVDRAVFA.

The interval 1–263 (MRRENARVVA…DYVSLTKPGV (263 aa)) is unknown. Transmembrane regions (helical) follow at residues 18-38 (WMVI…SIIP), 40-60 (MTGA…LAMY), 83-103 (YLTL…AGAL), 127-147 (WPAL…AALA), 163-183 (VACA…QVLL), 197-217 (LTHL…VTLA), 262-282 (GVIS…PAGI), 285-305 (WSLV…SHSI), 334-354 (HALA…AIFV), 357-377 (LTAL…TIWL), 385-405 (IVIG…AVTG), 412-432 (LLLW…LALI), 474-494 (LLGM…GLFL), and 509-529 (AWAL…AMVV). The segment at 264–535 (ISLLILTTIT…AMVVDRAVFA (272 aa)) is protoheme IX prenyltransferase.

This sequence in the C-terminal section; belongs to the UbiA prenyltransferase family. Protoheme IX farnesyltransferase subfamily.

The protein resides in the cell membrane. It carries out the reaction heme b + (2E,6E)-farnesyl diphosphate + H2O = Fe(II)-heme o + diphosphate. It participates in porphyrin-containing compound metabolism; heme O biosynthesis; heme O from protoheme: step 1/1. Converts heme B (protoheme IX) to heme O by substitution of the vinyl group on carbon 2 of heme B porphyrin ring with a hydroxyethyl farnesyl side group. The sequence is that of Protoheme IX farnesyltransferase (ctaB) from Roseiflexus castenholzii (strain DSM 13941 / HLO8).